Consider the following 170-residue polypeptide: Ubiquitin-conjugating enzyme E2 2 (170 aa).

The UBC core domain maps to 4-150 (PARRRLMRDF…VKETVEKSWE (147 aa)). Catalysis depends on cysteine 88, which acts as the Glycyl thioester intermediate. Residues 148–170 (SWEDDLKDMDDGDDDDDDDDDDD) form a disordered region. The segment covering 152–170 (DLKDMDDGDDDDDDDDDDD) has biased composition (acidic residues).

This sequence belongs to the ubiquitin-conjugating enzyme family.

It localises to the cytoplasm. The protein localises to the nucleus. The enzyme catalyses S-ubiquitinyl-[E1 ubiquitin-activating enzyme]-L-cysteine + [E2 ubiquitin-conjugating enzyme]-L-cysteine = [E1 ubiquitin-activating enzyme]-L-cysteine + S-ubiquitinyl-[E2 ubiquitin-conjugating enzyme]-L-cysteine.. It functions in the pathway protein modification; protein ubiquitination. Catalyzes the covalent attachment of ubiquitin to other proteins. Plays a role in transcription regulation by catalyzing the monoubiquitination of histone H2B to form H2BK123ub1. H2BK123ub1 gives a specific tag for epigenetic transcriptional activation and is also a prerequisite for H3K4me and H3K79me formation. Also involved in postreplication repair of UV-damaged DNA, in N-end rule-dependent protein degradation and in sporulation. In Eremothecium gossypii (strain ATCC 10895 / CBS 109.51 / FGSC 9923 / NRRL Y-1056) (Yeast), this protein is Ubiquitin-conjugating enzyme E2 2 (UBC2).